The chain runs to 236 residues: Phosphoribosylaminoimidazole-succinocarboxamide synthase (236 aa).

Belongs to the SAICAR synthetase family.

The catalysed reaction is 5-amino-1-(5-phospho-D-ribosyl)imidazole-4-carboxylate + L-aspartate + ATP = (2S)-2-[5-amino-1-(5-phospho-beta-D-ribosyl)imidazole-4-carboxamido]succinate + ADP + phosphate + 2 H(+). It functions in the pathway purine metabolism; IMP biosynthesis via de novo pathway; 5-amino-1-(5-phospho-D-ribosyl)imidazole-4-carboxamide from 5-amino-1-(5-phospho-D-ribosyl)imidazole-4-carboxylate: step 1/2. This Rickettsia africae (strain ESF-5) protein is Phosphoribosylaminoimidazole-succinocarboxamide synthase.